The chain runs to 191 residues: Holliday junction branch migration complex subunit RuvA (191 aa).

Residues 1-64 (MIGSITGNVE…DNITQLYGFL (64 aa)) are domain I. A domain II region spans residues 65–142 (NRQEQDYFKM…KMPIEETFSI (78 aa)). A flexible linker region spans residues 143–146 (IEND). Residues 146–191 (DDSLAALISLGYEKLKAFNVIQEIKSKTPDASTQEVIRKALQKLSQ) are domain III.

Belongs to the RuvA family. In terms of assembly, homotetramer. Forms an RuvA(8)-RuvB(12)-Holliday junction (HJ) complex. HJ DNA is sandwiched between 2 RuvA tetramers; dsDNA enters through RuvA and exits via RuvB. An RuvB hexamer assembles on each DNA strand where it exits the tetramer. Each RuvB hexamer is contacted by two RuvA subunits (via domain III) on 2 adjacent RuvB subunits; this complex drives branch migration. In the full resolvosome a probable DNA-RuvA(4)-RuvB(12)-RuvC(2) complex forms which resolves the HJ.

It localises to the cytoplasm. The RuvA-RuvB-RuvC complex processes Holliday junction (HJ) DNA during genetic recombination and DNA repair, while the RuvA-RuvB complex plays an important role in the rescue of blocked DNA replication forks via replication fork reversal (RFR). RuvA specifically binds to HJ cruciform DNA, conferring on it an open structure. The RuvB hexamer acts as an ATP-dependent pump, pulling dsDNA into and through the RuvAB complex. HJ branch migration allows RuvC to scan DNA until it finds its consensus sequence, where it cleaves and resolves the cruciform DNA. In Ehrlichia ruminantium (strain Gardel), this protein is Holliday junction branch migration complex subunit RuvA.